Consider the following 385-residue polypeptide: 1-deoxy-D-xylulose 5-phosphate reductoisomerase 1 (385 aa).

6 residues coordinate NADPH: threonine 11, glycine 12, serine 13, isoleucine 14, asparagine 39, and asparagine 122. Lysine 123 is a binding site for 1-deoxy-D-xylulose 5-phosphate. Glutamate 124 provides a ligand contact to NADPH. Aspartate 148 provides a ligand contact to Mn(2+). 1-deoxy-D-xylulose 5-phosphate is bound by residues serine 149, glutamate 150, serine 174, and histidine 197. Residue glutamate 150 participates in Mn(2+) binding. Position 203 (glycine 203) interacts with NADPH. The 1-deoxy-D-xylulose 5-phosphate site is built by serine 210, asparagine 215, lysine 216, and glutamate 219. Residue glutamate 219 participates in Mn(2+) binding.

Belongs to the DXR family. The cofactor is Mg(2+). It depends on Mn(2+) as a cofactor.

The catalysed reaction is 2-C-methyl-D-erythritol 4-phosphate + NADP(+) = 1-deoxy-D-xylulose 5-phosphate + NADPH + H(+). It participates in isoprenoid biosynthesis; isopentenyl diphosphate biosynthesis via DXP pathway; isopentenyl diphosphate from 1-deoxy-D-xylulose 5-phosphate: step 1/6. Its function is as follows. Catalyzes the NADPH-dependent rearrangement and reduction of 1-deoxy-D-xylulose-5-phosphate (DXP) to 2-C-methyl-D-erythritol 4-phosphate (MEP). This chain is 1-deoxy-D-xylulose 5-phosphate reductoisomerase 1, found in Bacillus anthracis.